The chain runs to 795 residues: Phenylalanine--tRNA ligase beta subunit (795 aa).

One can recognise a tRNA-binding domain in the interval 39–148 (AGRFTGVVVG…AEAPIGQDIR (110 aa)). In terms of domain architecture, B5 spans 401–476 (PQPATITLRR…RVYGYDAIPN (76 aa)). Asp454, Asp460, Glu463, and Glu464 together coordinate Mg(2+). One can recognise an FDX-ACB domain in the interval 701–794 (SRFPANRRDI…LKQRFQASLR (94 aa)).

The protein belongs to the phenylalanyl-tRNA synthetase beta subunit family. Type 1 subfamily. In terms of assembly, tetramer of two alpha and two beta subunits. Requires Mg(2+) as cofactor.

It is found in the cytoplasm. The catalysed reaction is tRNA(Phe) + L-phenylalanine + ATP = L-phenylalanyl-tRNA(Phe) + AMP + diphosphate + H(+). This is Phenylalanine--tRNA ligase beta subunit from Sodalis glossinidius (strain morsitans).